The chain runs to 208 residues: Uracil phosphoribosyltransferase (208 aa).

5-phospho-alpha-D-ribose 1-diphosphate-binding positions include arginine 78, arginine 103, and 130–138; that span reads DPMLATGGS. Uracil contacts are provided by residues isoleucine 193 and 198 to 200; that span reads GDA. Residue aspartate 199 participates in 5-phospho-alpha-D-ribose 1-diphosphate binding.

Belongs to the UPRTase family. Requires Mg(2+) as cofactor.

It catalyses the reaction UMP + diphosphate = 5-phospho-alpha-D-ribose 1-diphosphate + uracil. Its pathway is pyrimidine metabolism; UMP biosynthesis via salvage pathway; UMP from uracil: step 1/1. Its activity is regulated as follows. Allosterically activated by GTP. Catalyzes the conversion of uracil and 5-phospho-alpha-D-ribose 1-diphosphate (PRPP) to UMP and diphosphate. In Neisseria meningitidis serogroup B (strain ATCC BAA-335 / MC58), this protein is Uracil phosphoribosyltransferase.